The sequence spans 245 residues: Ribosomal RNA large subunit methyltransferase E (245 aa).

Positions 1–26 (MTKPPVGSNRSGRKLGQKVKKGKLKA) are disordered. Residues 11–26 (SGRKLGQKVKKGKLKA) show a composition bias toward basic residues. Residues G81, W83, D104, D120, and D144 each coordinate S-adenosyl-L-methionine. The Proton acceptor role is filled by K184.

The protein belongs to the class I-like SAM-binding methyltransferase superfamily. RNA methyltransferase RlmE family.

The protein localises to the cytoplasm. The catalysed reaction is uridine(2552) in 23S rRNA + S-adenosyl-L-methionine = 2'-O-methyluridine(2552) in 23S rRNA + S-adenosyl-L-homocysteine + H(+). Its function is as follows. Specifically methylates the uridine in position 2552 of 23S rRNA at the 2'-O position of the ribose in the fully assembled 50S ribosomal subunit. In Sinorhizobium medicae (strain WSM419) (Ensifer medicae), this protein is Ribosomal RNA large subunit methyltransferase E.